A 594-amino-acid polypeptide reads, in one-letter code: NADH-quinone oxidoreductase subunit C/D (594 aa).

Positions 1–185 (MTTGSALYIP…DPFSLNLAKQ (185 aa)) are NADH dehydrogenase I subunit C. An NADH dehydrogenase I subunit D region spans residues 209–594 (DYMFLNLGPN…IDFVMADVDR (386 aa)).

The protein in the N-terminal section; belongs to the complex I 30 kDa subunit family. In the C-terminal section; belongs to the complex I 49 kDa subunit family. NDH-1 is composed of 13 different subunits. Subunits NuoB, CD, E, F, and G constitute the peripheral sector of the complex.

The protein resides in the cell inner membrane. It carries out the reaction a quinone + NADH + 5 H(+)(in) = a quinol + NAD(+) + 4 H(+)(out). Its function is as follows. NDH-1 shuttles electrons from NADH, via FMN and iron-sulfur (Fe-S) centers, to quinones in the respiratory chain. The immediate electron acceptor for the enzyme in this species is believed to be ubiquinone. Couples the redox reaction to proton translocation (for every two electrons transferred, four hydrogen ions are translocated across the cytoplasmic membrane), and thus conserves the redox energy in a proton gradient. This is NADH-quinone oxidoreductase subunit C/D from Pseudomonas fluorescens (strain SBW25).